The primary structure comprises 203 residues: LexA repressor (203 aa).

The H-T-H motif DNA-binding region spans 29-49 (VREIGQEVGLSSSSTVHGYLK). Catalysis depends on for autocatalytic cleavage activity residues S126 and K163.

This sequence belongs to the peptidase S24 family. In terms of assembly, homodimer.

The enzyme catalyses Hydrolysis of Ala-|-Gly bond in repressor LexA.. Represses a number of genes involved in the response to DNA damage (SOS response), including recA and lexA. In the presence of single-stranded DNA, RecA interacts with LexA causing an autocatalytic cleavage which disrupts the DNA-binding part of LexA, leading to derepression of the SOS regulon and eventually DNA repair. The sequence is that of LexA repressor from Pelotomaculum thermopropionicum (strain DSM 13744 / JCM 10971 / SI).